The primary structure comprises 72 residues: Translation initiation factor IF-1 (72 aa).

Residues 1–72 (MAKDDVIEVD…DKGRITYRHK (72 aa)) form the S1-like domain.

It belongs to the IF-1 family. In terms of assembly, component of the 30S ribosomal translation pre-initiation complex which assembles on the 30S ribosome in the order IF-2 and IF-3, IF-1 and N-formylmethionyl-tRNA(fMet); mRNA recruitment can occur at any time during PIC assembly.

The protein resides in the cytoplasm. In terms of biological role, one of the essential components for the initiation of protein synthesis. Stabilizes the binding of IF-2 and IF-3 on the 30S subunit to which N-formylmethionyl-tRNA(fMet) subsequently binds. Helps modulate mRNA selection, yielding the 30S pre-initiation complex (PIC). Upon addition of the 50S ribosomal subunit IF-1, IF-2 and IF-3 are released leaving the mature 70S translation initiation complex. The sequence is that of Translation initiation factor IF-1 from Helicobacter hepaticus (strain ATCC 51449 / 3B1).